The following is a 160-amino-acid chain: Ubiquitin-conjugating enzyme E2 16 (160 aa).

The UBC core domain maps to 3–153 (SSIKRLHKEY…VRCTTYLYAK (151 aa)). Cys-90 serves as the catalytic Glycyl thioester intermediate.

The protein belongs to the ubiquitin-conjugating enzyme family.

It catalyses the reaction S-ubiquitinyl-[E1 ubiquitin-activating enzyme]-L-cysteine + [E2 ubiquitin-conjugating enzyme]-L-cysteine = [E1 ubiquitin-activating enzyme]-L-cysteine + S-ubiquitinyl-[E2 ubiquitin-conjugating enzyme]-L-cysteine.. The protein operates within protein modification; protein ubiquitination. In terms of biological role, catalyzes the covalent attachment of ubiquitin to other proteins. This chain is Ubiquitin-conjugating enzyme E2 16 (ubc16), found in Schizosaccharomyces pombe (strain 972 / ATCC 24843) (Fission yeast).